The primary structure comprises 175 residues: Crossover junction endodeoxyribonuclease RuvC (175 aa).

Active-site residues include D16, E76, and D148. 3 residues coordinate Mg(2+): D16, E76, and D148.

This sequence belongs to the RuvC family. In terms of assembly, homodimer which binds Holliday junction (HJ) DNA. The HJ becomes 2-fold symmetrical on binding to RuvC with unstacked arms; it has a different conformation from HJ DNA in complex with RuvA. In the full resolvosome a probable DNA-RuvA(4)-RuvB(12)-RuvC(2) complex forms which resolves the HJ. It depends on Mg(2+) as a cofactor.

It is found in the cytoplasm. The catalysed reaction is Endonucleolytic cleavage at a junction such as a reciprocal single-stranded crossover between two homologous DNA duplexes (Holliday junction).. Functionally, the RuvA-RuvB-RuvC complex processes Holliday junction (HJ) DNA during genetic recombination and DNA repair. Endonuclease that resolves HJ intermediates. Cleaves cruciform DNA by making single-stranded nicks across the HJ at symmetrical positions within the homologous arms, yielding a 5'-phosphate and a 3'-hydroxyl group; requires a central core of homology in the junction. The consensus cleavage sequence is 5'-(A/T)TT(C/G)-3'. Cleavage occurs on the 3'-side of the TT dinucleotide at the point of strand exchange. HJ branch migration catalyzed by RuvA-RuvB allows RuvC to scan DNA until it finds its consensus sequence, where it cleaves and resolves the cruciform DNA. This chain is Crossover junction endodeoxyribonuclease RuvC, found in Bradyrhizobium sp. (strain ORS 278).